Consider the following 445-residue polypeptide: Exodeoxyribonuclease 7 large subunit (445 aa).

It belongs to the XseA family. As to quaternary structure, heterooligomer composed of large and small subunits.

The protein localises to the cytoplasm. The enzyme catalyses Exonucleolytic cleavage in either 5'- to 3'- or 3'- to 5'-direction to yield nucleoside 5'-phosphates.. Its function is as follows. Bidirectionally degrades single-stranded DNA into large acid-insoluble oligonucleotides, which are then degraded further into small acid-soluble oligonucleotides. In Nautilia profundicola (strain ATCC BAA-1463 / DSM 18972 / AmH), this protein is Exodeoxyribonuclease 7 large subunit.